The sequence spans 485 residues: MTHWIAGEWVAGTGEKLQSHTPYSHELLWQGYSASGEQVDAAVNAARRAFLDWKKRPFAEREQKVLAFAELVKANSEQIAQVIAKETGKPLWETRTEAASIAGKIAISIRAYHERTGETVREAAGNQLVLRHRPLGVMAVFGPYNFPGHLPNGHIVPALLAGNTVVFKPSEQTPWTGEVLMQLWQQAGLPAGVINLVQGSKETGIALAQSRGIDGLLFTGSANTGHLLHRQFAGQPDKMLALEMGGNNPMVISEHYGDLDATVYTIIQSAFISSGQRCTCARRLYVPLGTKGDALLDKLVSVTANLRIDQPFAEPAPFMGPLVSEAAAQVILKAQADLQALGGKSLLEARALHAAFITPAIIDVTAIERLPDDEYFGPLLQVVRYQTLAQAVELANDTRFGLSAGLVSTDDGEWDYFVEHIRAGIVNRNRQLTGASGDAPFGGPGASGNLRPSAFYAADYCAYPMASMEGETTLLPATLSPGVEL.

Residue 220 to 225 (GSANTG) coordinates NAD(+). Catalysis depends on residues Glu243 and Cys278.

Belongs to the aldehyde dehydrogenase family. AstD subfamily.

The enzyme catalyses N-succinyl-L-glutamate 5-semialdehyde + NAD(+) + H2O = N-succinyl-L-glutamate + NADH + 2 H(+). The protein operates within amino-acid degradation; L-arginine degradation via AST pathway; L-glutamate and succinate from L-arginine: step 4/5. In terms of biological role, catalyzes the NAD-dependent reduction of succinylglutamate semialdehyde into succinylglutamate. The sequence is that of N-succinylglutamate 5-semialdehyde dehydrogenase from Vibrio cholerae serotype O1 (strain M66-2).